A 133-amino-acid chain; its full sequence is Ribonuclease P protein component (133 aa).

The protein belongs to the RnpA family. As to quaternary structure, consists of a catalytic RNA component (M1 or rnpB) and a protein subunit.

The catalysed reaction is Endonucleolytic cleavage of RNA, removing 5'-extranucleotides from tRNA precursor.. RNaseP catalyzes the removal of the 5'-leader sequence from pre-tRNA to produce the mature 5'-terminus. It can also cleave other RNA substrates such as 4.5S RNA. The protein component plays an auxiliary but essential role in vivo by binding to the 5'-leader sequence and broadening the substrate specificity of the ribozyme. In Pseudomonas putida (strain ATCC 47054 / DSM 6125 / CFBP 8728 / NCIMB 11950 / KT2440), this protein is Ribonuclease P protein component.